Reading from the N-terminus, the 547-residue chain is Chaperonin GroEL 3 (547 aa).

Residues 30 to 33 (TLGP), K51, 87 to 91 (DGTTT), G415, and D496 each bind ATP.

Belongs to the chaperonin (HSP60) family. In terms of assembly, forms a cylinder of 14 subunits composed of two heptameric rings stacked back-to-back. Interacts with the co-chaperonin GroES.

The protein localises to the cytoplasm. It carries out the reaction ATP + H2O + a folded polypeptide = ADP + phosphate + an unfolded polypeptide.. Together with its co-chaperonin GroES, plays an essential role in assisting protein folding. The GroEL-GroES system forms a nano-cage that allows encapsulation of the non-native substrate proteins and provides a physical environment optimized to promote and accelerate protein folding. This Bradyrhizobium sp. (strain ORS 278) protein is Chaperonin GroEL 3.